We begin with the raw amino-acid sequence, 196 residues long: Imidazoleglycerol-phosphate dehydratase (196 aa).

This sequence belongs to the imidazoleglycerol-phosphate dehydratase family.

The protein resides in the cytoplasm. The catalysed reaction is D-erythro-1-(imidazol-4-yl)glycerol 3-phosphate = 3-(imidazol-4-yl)-2-oxopropyl phosphate + H2O. It participates in amino-acid biosynthesis; L-histidine biosynthesis; L-histidine from 5-phospho-alpha-D-ribose 1-diphosphate: step 6/9. The protein is Imidazoleglycerol-phosphate dehydratase of Desulforamulus reducens (strain ATCC BAA-1160 / DSM 100696 / MI-1) (Desulfotomaculum reducens).